The sequence spans 220 residues: Urease accessory protein UreF (220 aa).

This sequence belongs to the UreF family. As to quaternary structure, ureD, UreF and UreG form a complex that acts as a GTP-hydrolysis-dependent molecular chaperone, activating the urease apoprotein by helping to assemble the nickel containing metallocenter of UreC. The UreE protein probably delivers the nickel.

The protein resides in the cytoplasm. Its function is as follows. Required for maturation of urease via the functional incorporation of the urease nickel metallocenter. The polypeptide is Urease accessory protein UreF (Bordetella bronchiseptica (strain ATCC BAA-588 / NCTC 13252 / RB50) (Alcaligenes bronchisepticus)).